We begin with the raw amino-acid sequence, 63 residues long: Hirudin (63 aa).

Residues 1–3 (VVY) are interaction with thrombin active site. Intrachain disulfides connect cysteine 6–cysteine 14, cysteine 16–cysteine 28, and cysteine 22–cysteine 39. The tract at residues 39 to 63 (CVTGEGTPGPQSHNDGDFEEPEEYL) is disordered. Threonine 45 carries an O-linked (GalNAc...) threonine glycan. The interaction with fibrinogen-binding exosite of thrombin stretch occupies residues 55-63 (DFEEPEEYL). Tyrosine 62 carries the sulfotyrosine modification.

Belongs to the protease inhibitor I14 (hirudin) family.

It localises to the secreted. Its function is as follows. Hirudin is a potent thrombin-specific protease inhibitor. It forms a stable non-covalent complex with alpha-thrombin, thereby abolishing its ability to cleave fibrinogen. In Poecilobdella viridis (Indian freshwater leech), this protein is Hirudin.